Here is a 272-residue protein sequence, read N- to C-terminus: Shikimate dehydrogenase (NADP(+)) (272 aa).

Residues 14-16 and Thr61 contribute to the shikimate site; that span reads SKS. The Proton acceptor role is filled by Lys65. 2 residues coordinate shikimate: Asn86 and Asp102. NADP(+) is bound by residues 126–130, 150–155, and Met214; these read GAGGA and NRTASK. Tyr216 provides a ligand contact to shikimate. Gly239 provides a ligand contact to NADP(+).

Belongs to the shikimate dehydrogenase family. In terms of assembly, homodimer.

It carries out the reaction shikimate + NADP(+) = 3-dehydroshikimate + NADPH + H(+). The protein operates within metabolic intermediate biosynthesis; chorismate biosynthesis; chorismate from D-erythrose 4-phosphate and phosphoenolpyruvate: step 4/7. Its function is as follows. Involved in the biosynthesis of the chorismate, which leads to the biosynthesis of aromatic amino acids. Catalyzes the reversible NADPH linked reduction of 3-dehydroshikimate (DHSA) to yield shikimate (SA). This is Shikimate dehydrogenase (NADP(+)) from Pseudoalteromonas atlantica (strain T6c / ATCC BAA-1087).